Consider the following 387-residue polypeptide: Probable protein phosphatase 2C 25 (387 aa).

One can recognise a PPM-type phosphatase domain in the interval 52–351 (EFSFAVVQAN…DDITVVVVYI (300 aa)). Positions 83, 84, 283, and 342 each coordinate Mn(2+).

It belongs to the PP2C family. It depends on Mg(2+) as a cofactor. Requires Mn(2+) as cofactor.

It catalyses the reaction O-phospho-L-seryl-[protein] + H2O = L-seryl-[protein] + phosphate. It carries out the reaction O-phospho-L-threonyl-[protein] + H2O = L-threonyl-[protein] + phosphate. In Oryza sativa subsp. japonica (Rice), this protein is Probable protein phosphatase 2C 25.